A 1088-amino-acid chain; its full sequence is Leucine-rich repeat receptor-like protein kinase PEPR2 (1088 aa).

The N-terminal stretch at methionine 1 to serine 26 is a signal peptide. Topologically, residues leucine 27–alanine 739 are extracellular. Residues asparagine 55, asparagine 82, and asparagine 122 are each glycosylated (N-linked (GlcNAc...) asparagine). LRR repeat units follow at residues glycine 75–leucine 99, lysine 100–asparagine 122, cysteine 123–serine 146, leucine 147–glycine 170, isoleucine 172–asparagine 194, cysteine 195–leucine 219, asparagine 221–cysteine 243, lysine 244–cysteine 267, serine 269–leucine 291, arginine 292–cysteine 315, serine 316–leucine 339, lysine 341–isoleucine 363, serine 365–leucine 387, lysine 388–asparagine 411, arginine 412–glycine 435, glutamine 436–cysteine 459, lysine 460–leucine 485, tyrosine 487–cysteine 506, lysine 507–asparagine 529, leucine 530–cysteine 554, arginine 556–serine 577, tryptophan 578–leucine 602, aspartate 603–lysine 627, leucine 629–leucine 651, isoleucine 652–serine 676, and asparagine 678–asparagine 698. N-linked (GlcNAc...) asparagine glycosylation is found at asparagine 149, asparagine 159, asparagine 183, asparagine 194, asparagine 209, asparagine 229, asparagine 266, asparagine 279, and asparagine 314. N-linked (GlcNAc...) asparagine glycosylation is found at asparagine 373 and asparagine 411. Residues asparagine 537 and asparagine 568 are each glycosylated (N-linked (GlcNAc...) asparagine). Asparagine 658 and asparagine 698 each carry an N-linked (GlcNAc...) asparagine glycan. The chain crosses the membrane as a helical span at residues leucine 740–leucine 760. Residues cysteine 761–histidine 1088 lie on the Cytoplasmic side of the membrane. At threonine 791 the chain carries Phosphothreonine. One can recognise a Protein kinase domain in the interval leucine 794–valine 1080. Residues isoleucine 800 to valine 808 and lysine 822 each bind ATP. Phosphotyrosine is present on residues tyrosine 868 and tyrosine 908. Aspartate 921 acts as the Proton acceptor in catalysis. 2 positions are modified to phosphotyrosine: tyrosine 962 and tyrosine 969.

It belongs to the protein kinase superfamily. Ser/Thr protein kinase family. Interacts with BAK1. Interacts with CLE14.

Its subcellular location is the cell membrane. The enzyme catalyses L-seryl-[protein] + ATP = O-phospho-L-seryl-[protein] + ADP + H(+). The catalysed reaction is L-threonyl-[protein] + ATP = O-phospho-L-threonyl-[protein] + ADP + H(+). Acts as a receptor for PEP defense peptides. Unlike typical immune receptors, senses an endogenous elicitor that potentiates PAMP-inducible plant responses. This chain is Leucine-rich repeat receptor-like protein kinase PEPR2 (PEPR2), found in Arabidopsis thaliana (Mouse-ear cress).